The primary structure comprises 455 residues: Alcohol acyl transferase 1 allele GSb (455 aa).

Residues histidine 164 and asparagine 385 each act as proton acceptor in the active site.

This sequence belongs to the plant acyltransferase family. Expressed at very low levels in the skin of ripe fruit.

Its function is as follows. Involved in the biosynthesis of volatile esters which confer ripe apple fruit flavor. Alcohol acyl transferase that can use a wide range of alcohols as substrate to produce esters. The chain is Alcohol acyl transferase 1 allele GSb from Malus domestica (Apple).